We begin with the raw amino-acid sequence, 614 residues long: MTIQILSPQLANQIAAGEVVERPASVIKELVENSLDAGATRVDIEIDKGGSKLIKIQDNGSGIPKSELNLALSRHATSKLSTLDDLDAILSFGFRGEALASISSVSRLTLTSRTAEQTEAWQAYAEGSDMAVKVIPAAHPVGTTIEAVDLFFNTPARRRFLKSDKTEFTHIDEWLKRIALVKPEIHFTLKHNGKQVRNYRPANNQDQYLMRLAQICGKNFAEQAIEIDCQHEGLTLSGYIQSPFFTSPASDTQFFYVNGRLIRDRLVNHAVRQAFSEHGTGELASYVLMLEIAPHQVDVNVHPAKHEVRFHQSRYVHDYILQALQSALMQVARASISLPEEKLVEFVEDDWHSKPLSTGRVSEADPSNYATQSKFDEKPRESGSQGQSSSISAPSSYSRGGEYSARSQPELPSASEIASYTQLLKTPQTAQASKLVNSDLKTPMPPVLAGQYWVYAGDELSLLPIDIVAKWLVKRDILAKIDNGLVSQPLLMPVSIKVDEDWLNTIDEREQLLRQLGIEITIRLGQLIIKKVPPYLRQSQLVTVIPELLQWVRFEEPTHEALALWLAKQDDGKFESAVATWSAFSQLDDEIQQELAQKAKVLPWQSWLEEQLSD.

The disordered stretch occupies residues 355-411; sequence PLSTGRVSEADPSNYATQSKFDEKPRESGSQGQSSSISAPSSYSRGGEYSARSQPEL. Residues 382–401 show a composition bias toward low complexity; sequence SGSQGQSSSISAPSSYSRGG.

It belongs to the DNA mismatch repair MutL/HexB family.

Functionally, this protein is involved in the repair of mismatches in DNA. It is required for dam-dependent methyl-directed DNA mismatch repair. May act as a 'molecular matchmaker', a protein that promotes the formation of a stable complex between two or more DNA-binding proteins in an ATP-dependent manner without itself being part of a final effector complex. The polypeptide is DNA mismatch repair protein MutL (Shewanella woodyi (strain ATCC 51908 / MS32)).